Consider the following 582-residue polypeptide: Potassium-transporting ATPase potassium-binding subunit (582 aa).

A run of 11 helical transmembrane segments spans residues 6–26, 65–85, 87–107, 136–156, 178–198, 277–297, 304–324, 402–422, 441–461, 505–525, and 546–566; these read LVQLLFFLSVLLVLSWPLGLY, IYALVMLGLNAFGMVFVYVLE, LQGGLPLNPLHLPGVDPFVAV, GLAVQNFLSAATGMAVAVALI, VLYILLPLSFVLALLLVWQGV, LEMLAILLIPAALCHTFGVMI, LAILAAMTILFAGFAALTLAA, GLYGMLVFAVVTVFVAGLMVG, ALVILIPPFLCLAGTALAAVI, IAGAVAMFVSRYWLIVPVLAL, and GGIFVALLIIVVLVVGALTFV.

It belongs to the KdpA family. As to quaternary structure, the system is composed of three essential subunits: KdpA, KdpB and KdpC.

It is found in the cell inner membrane. Part of the high-affinity ATP-driven potassium transport (or Kdp) system, which catalyzes the hydrolysis of ATP coupled with the electrogenic transport of potassium into the cytoplasm. This subunit binds the periplasmic potassium ions and delivers the ions to the membrane domain of KdpB through an intramembrane tunnel. The polypeptide is Potassium-transporting ATPase potassium-binding subunit (Solidesulfovibrio magneticus (strain ATCC 700980 / DSM 13731 / RS-1) (Desulfovibrio magneticus)).